A 314-amino-acid polypeptide reads, in one-letter code: 3'-5' exoribonuclease YhaM (314 aa).

The HD domain occupies 163–279 (HVVSMLNLAK…LHYIDNLDAK (117 aa)).

The protein belongs to the YhaM family.

Its function is as follows. Shows a 3'-5' exoribonuclease activity. The sequence is that of 3'-5' exoribonuclease YhaM from Bacillus velezensis (strain DSM 23117 / BGSC 10A6 / LMG 26770 / FZB42) (Bacillus amyloliquefaciens subsp. plantarum).